The primary structure comprises 165 residues: Nucleotide-binding protein P9215_05621 (165 aa).

This sequence belongs to the YajQ family.

Functionally, nucleotide-binding protein. This Prochlorococcus marinus (strain MIT 9215) protein is Nucleotide-binding protein P9215_05621.